An 86-amino-acid chain; its full sequence is Putative membrane protein insertion efficiency factor (86 aa).

The protein belongs to the UPF0161 family.

Its subcellular location is the cell inner membrane. In terms of biological role, could be involved in insertion of integral membrane proteins into the membrane. The sequence is that of Putative membrane protein insertion efficiency factor from Histophilus somni (strain 129Pt) (Haemophilus somnus).